The following is a 366-amino-acid chain: 5-hydroxytryptamine receptor 1F (366 aa).

Residues 1–24 (MDFLNSSDQNLTSEELLNRMPSKI) are Extracellular-facing. Residues Asn-5 and Asn-10 are each glycosylated (N-linked (GlcNAc...) asparagine). Residues 25–49 (LVSLTLSGLALMTTTINCLVITAII) form a helical membrane-spanning segment. At 50–59 (VTRKLHHPAN) the chain is on the cytoplasmic side. The helical transmembrane segment at 60 to 81 (YLICSLAVTDFLVAVLVMPFSI) threads the bilayer. The Extracellular segment spans residues 82-96 (VYIVRESWIMGQGLC). Cysteines 96 and 172 form a disulfide. The chain crosses the membrane as a helical span at residues 97 to 119 (DLWLSVDIICCTCSILHLSAIAL). Residues Asp-103 and Cys-107 each coordinate serotonin. The short motif at 120 to 122 (DRY) is the DRY motif; important for ligand-induced conformation changes element. At 120–139 (DRYRAITDAVEYARKRTPRH) the chain is on the cytoplasmic side. A helical membrane pass occupies residues 140 to 159 (AGITITTVWVISVFISVPPL). Residues 160–178 (FWRHQGNSRDDQCIIKHDH) lie on the Extracellular side of the membrane. Residues 179-202 (IVSTIYSTFGAFYIPLVLILILYY) form a helical membrane-spanning segment. The Cytoplasmic segment spans residues 203 to 291 (KIYRAARTLY…KISGTRERKA (89 aa)). A helical membrane pass occupies residues 292–315 (ATTLGLILGAFVICWLPFFVKELV). Over 316-327 (VNICEKCKISEE) the chain is Extracellular. A helical membrane pass occupies residues 328–350 (MSNFLAWLGYLNSLINPLIYTIF). Residues 343-347 (NPLIY) carry the NPxxY motif; important for ligand-induced conformation changes and signaling motif. The Cytoplasmic segment spans residues 351–366 (NEDFKKAFQKLVRCRN).

This sequence belongs to the G-protein coupled receptor 1 family.

The protein resides in the cell membrane. G-protein coupled receptor for 5-hydroxytryptamine (serotonin). Also functions as a receptor for various alkaloids and psychoactive substances. Ligand binding causes a conformation change that triggers signaling via guanine nucleotide-binding proteins (G proteins) and modulates the activity of downstream effectors, such as adenylate cyclase. HTR1F is coupled to G(i)/G(o) G alpha proteins and mediates inhibitory neurotransmission by inhibiting adenylate cyclase activity. This is 5-hydroxytryptamine receptor 1F (Htr1f) from Rattus norvegicus (Rat).